We begin with the raw amino-acid sequence, 172 residues long: Large ribosomal subunit protein uL10 (172 aa).

The protein belongs to the universal ribosomal protein uL10 family. Part of the ribosomal stalk of the 50S ribosomal subunit. The N-terminus interacts with L11 and the large rRNA to form the base of the stalk. The C-terminus forms an elongated spine to which L12 dimers bind in a sequential fashion forming a multimeric L10(L12)X complex.

Functionally, forms part of the ribosomal stalk, playing a central role in the interaction of the ribosome with GTP-bound translation factors. The chain is Large ribosomal subunit protein uL10 from Methylorubrum extorquens (strain CM4 / NCIMB 13688) (Methylobacterium extorquens).